A 304-amino-acid polypeptide reads, in one-letter code: Acetyl-coenzyme A carboxylase carboxyl transferase subunit beta (304 aa).

Residues 23-292 (VWTKCDSCGQ…PNPDAPREGV (270 aa)) form the CoA carboxyltransferase N-terminal domain. Positions 27, 30, 46, and 49 each coordinate Zn(2+). Residues 27-49 (CDSCGQVLYRAELERNLEVCPKC) form a C4-type zinc finger. Residues 284–304 (NPDAPREGVVVPPAPDQESEV) form a disordered region.

The protein belongs to the AccD/PCCB family. As to quaternary structure, acetyl-CoA carboxylase is a heterohexamer composed of biotin carboxyl carrier protein (AccB), biotin carboxylase (AccC) and two subunits each of ACCase subunit alpha (AccA) and ACCase subunit beta (AccD). The cofactor is Zn(2+).

The protein localises to the cytoplasm. It carries out the reaction N(6)-carboxybiotinyl-L-lysyl-[protein] + acetyl-CoA = N(6)-biotinyl-L-lysyl-[protein] + malonyl-CoA. The protein operates within lipid metabolism; malonyl-CoA biosynthesis; malonyl-CoA from acetyl-CoA: step 1/1. In terms of biological role, component of the acetyl coenzyme A carboxylase (ACC) complex. Biotin carboxylase (BC) catalyzes the carboxylation of biotin on its carrier protein (BCCP) and then the CO(2) group is transferred by the transcarboxylase to acetyl-CoA to form malonyl-CoA. In Salmonella paratyphi A (strain ATCC 9150 / SARB42), this protein is Acetyl-coenzyme A carboxylase carboxyl transferase subunit beta.